Here is a 177-residue protein sequence, read N- to C-terminus: Large ribosomal subunit protein uL6 (177 aa).

The protein belongs to the universal ribosomal protein uL6 family. In terms of assembly, part of the 50S ribosomal subunit.

Functionally, this protein binds to the 23S rRNA, and is important in its secondary structure. It is located near the subunit interface in the base of the L7/L12 stalk, and near the tRNA binding site of the peptidyltransferase center. The protein is Large ribosomal subunit protein uL6 of Rickettsia massiliae (strain Mtu5).